Consider the following 198-residue polypeptide: Probable molybdenum cofactor guanylyltransferase (198 aa).

Residues 9-11 (LAG), Lys22, Asp66, and Asp95 contribute to the GTP site. Asp95 serves as a coordination point for Mg(2+).

This sequence belongs to the MobA family. Mg(2+) is required as a cofactor.

It localises to the cytoplasm. The catalysed reaction is Mo-molybdopterin + GTP + H(+) = Mo-molybdopterin guanine dinucleotide + diphosphate. Transfers a GMP moiety from GTP to Mo-molybdopterin (Mo-MPT) cofactor (Moco or molybdenum cofactor) to form Mo-molybdopterin guanine dinucleotide (Mo-MGD) cofactor. The chain is Probable molybdenum cofactor guanylyltransferase from Clostridium perfringens (strain SM101 / Type A).